The primary structure comprises 1060 residues: Desmoglein-1-beta (1060 aa).

The signal sequence occupies residues 1–23 (MDWHSFRIAALLLTSLVVLEVNS). Residues 24–49 (EFQIQVRDHNAKNGTIKWHSIRRQKR) constitute a propeptide that is removed on maturation. 4 Cadherin domains span residues 50 to 157 (EWIK…PPVF), 158 to 269 (SMTT…IPYL), 270 to 389 (EQSS…RPGS), and 386 to 493 (RPGS…PGSD). Over 50-567 (EWIKFAAACR…ITEDNVHFGP (518 aa)) the chain is Extracellular. N110 is a glycosylation site (N-linked (GlcNAc...) (high mannose) asparagine). The N-linked (GlcNAc...) asparagine glycan is linked to N180. Residues 490 to 560 (PGSDGGGSSS…PEPEPFDITE (71 aa)) form a disordered region. The segment covering 492–503 (SDGGGSSSGSGG) has biased composition (gly residues). The segment covering 510 to 519 (NGYQGTSTVG) has biased composition (polar residues). A compositionally biased stretch (gly residues) spans 525-537 (GSGGVTSSGGGSG). Over residues 549–560 (DEPEPEPFDITE) the composition is skewed to acidic residues. Residues 568–588 (AGIGLLIMGFLVLGLVPFLLI) form a helical membrane-spanning segment. The Cytoplasmic portion of the chain corresponds to 589 to 1060 (CCDCGGAPGG…TKYSTVQYSK (472 aa)). Residues 792-801 (PDPDSSWPPQ) are compositionally biased toward low complexity. The disordered stretch occupies residues 792 to 811 (PDPDSSWPPQSTEPMCPQST). 5 Desmoglein repeat repeats span residues 835–861 (AYPS…TVRE), 862–891 (SYAT…ERVV), 892–921 (GPVP…ERVI), 922–949 (APGS…ERVI), and 950–978 (QPTS…ERVV).

Interacts with DSC3; there is evidence to suggest that the interaction promotes cell-cell adhesion of keratinocytes. As to expression, expressed in epidermis.

Its subcellular location is the cell membrane. It is found in the cell junction. It localises to the desmosome. The protein localises to the cytoplasm. The protein resides in the nucleus. Its function is as follows. Component of intercellular desmosome junctions. Involved in the interaction of plaque proteins and intermediate filaments mediating cell-cell adhesion. This Mus musculus (Mouse) protein is Desmoglein-1-beta (Dsg1b).